The chain runs to 152 residues: Deoxyuridine 5'-triphosphate nucleotidohydrolase (152 aa).

Substrate is bound by residues 71–73, Asn-84, 88–90, and Met-98; these read RSG and LID.

It belongs to the dUTPase family. Requires Mg(2+) as cofactor.

It catalyses the reaction dUTP + H2O = dUMP + diphosphate + H(+). It functions in the pathway pyrimidine metabolism; dUMP biosynthesis; dUMP from dCTP (dUTP route): step 2/2. Its function is as follows. This enzyme is involved in nucleotide metabolism: it produces dUMP, the immediate precursor of thymidine nucleotides and it decreases the intracellular concentration of dUTP so that uracil cannot be incorporated into DNA. This is Deoxyuridine 5'-triphosphate nucleotidohydrolase from Cronobacter sakazakii (strain ATCC BAA-894) (Enterobacter sakazakii).